The chain runs to 782 residues: MRQKTLDVLEFEKIKSLVANETISDLGLEKVNQMMPATNFETVVFQMEETDEIAQIYNKHRLPSLSGLSKVSAFIHRADIGGVLNVSELNLIKRLIQVQNQFKTFYNQLVEEDEGVKYPILDDKMNQLPVLTDLFQQINETCDTYDLYDNASYELQGIRSKISSTNQRIRQNLDRIVKSQANQKKLSDAIVTVRNERNVIPVKAEYRQDFNGIVHDQSASGQTLYIEPSSVVEMNNQISRLRHDEAIEKERILTQLTGYVAADKDALLVAEHVMGQLDFLIAKARYSRSIKGTKPIFKEERTVYLPKAYHPLLNRETVVANTIEFMEDIETVIITGPNTGGKTVTLKTLGLIIIMAQSGLLIPTLDGSQLSVFKNVYCDIGDEQSIEQSLSTFSSHMTNIVEILKHADKHSLVLFDELGAGTDPSEGAALAMSILDHVRKIGSLVMATTHYPELKAYSCNREGVMNASVEFDVDTLSPTYKLLMGVPGRSNAFDISKKLGLSLNIINKAKTMIGTDEKEINEMIESLERNYKRVETQRLELDRLVKEAEQVHDDLSKQYQQFQNYEKSLIEEAKEKANQKIKAATKEADDIIKDLRQLREQKGADVKEHELIDKKKRLDDHYEAKSIKQNVQKQKYDKIVAGDEVKVLSYGQKGEVLEIVNDEEAIVQMGIIKMKLPIEDLEKKQKEKVKPTKMVTRQNRQTIKTELDLRGYRYEDALIELDQYLDQAVLSNYEQVYIIHGKGTGALQKGVQQHLKKHKSVSDFRGGMPSEGGFGVTVATLK.

336 to 343 contributes to the ATP binding site; sequence GPNTGGKT. The Smr domain maps to 707 to 782; the sequence is LDLRGYRYED…GFGVTVATLK (76 aa).

It belongs to the DNA mismatch repair MutS family. MutS2 subfamily. As to quaternary structure, homodimer. Binds to stalled ribosomes, contacting rRNA.

Endonuclease that is involved in the suppression of homologous recombination and thus may have a key role in the control of bacterial genetic diversity. In terms of biological role, acts as a ribosome collision sensor, splitting the ribosome into its 2 subunits. Detects stalled/collided 70S ribosomes which it binds and splits by an ATP-hydrolysis driven conformational change. Acts upstream of the ribosome quality control system (RQC), a ribosome-associated complex that mediates the extraction of incompletely synthesized nascent chains from stalled ribosomes and their subsequent degradation. Probably generates substrates for RQC. This Staphylococcus aureus (strain bovine RF122 / ET3-1) protein is Endonuclease MutS2.